The chain runs to 306 residues: Lipid A biosynthesis lauroyltransferase (306 aa).

Residues 17-37 (WLTWLGIGVLWLVVQLPYPVI) form a helical membrane-spanning segment. The short motif at 132–137 (HFLTLE) is the HXXXXD motif element.

This sequence belongs to the LpxL/LpxM/LpxP family. Monomer.

Its subcellular location is the cell inner membrane. It carries out the reaction dodecanoyl-[ACP] + alpha-Kdo-(2-&gt;4)-alpha-Kdo-(2-&gt;6)-lipid IVA (E. coli) = alpha-Kdo-(2-&gt;4)-alpha-Kdo-(2-&gt;6)-(dodecanoyl)-lipid IVA (E. coli) + holo-[ACP]. Its pathway is glycolipid biosynthesis; KDO(2)-lipid A biosynthesis; KDO(2)-lipid A from CMP-3-deoxy-D-manno-octulosonate and lipid IV(A): step 3/4. It participates in bacterial outer membrane biogenesis; lipopolysaccharide biosynthesis. Its function is as follows. Catalyzes the transfer of laurate from lauroyl-[acyl-carrier-protein] (ACP) to Kdo(2)-lipid IV(A) to form Kdo(2)-(lauroyl)-lipid IV(A). Has 10 fold selectivity for lauroyl-ACP over myristoyl-ACP. In vitro, can also catalyze a slow second acylation reaction leading to the formation of Kdo(2)-(dilauroyl)-lipid IV(A). This chain is Lipid A biosynthesis lauroyltransferase, found in Escherichia coli (strain K12).